Reading from the N-terminus, the 229-residue chain is Guanylate kinase (229 aa).

Residues 7 to 42 (RVLQKCAYREEFKGDMERSTAATSKLPLEVELSRNS) enclose the RPE1 insert domain. Residues 44–222 (GLIIILSSPS…TLKKIHAIIV (179 aa)) form the Guanylate kinase-like domain. 51–58 (SPSGTGKS) is an ATP binding site.

Belongs to the guanylate kinase family.

The protein resides in the cytoplasm. It carries out the reaction GMP + ATP = GDP + ADP. Its function is as follows. Essential for recycling GMP and indirectly, cGMP. The polypeptide is Guanylate kinase (gmk) (Rickettsia conorii (strain ATCC VR-613 / Malish 7)).